We begin with the raw amino-acid sequence, 1038 residues long: Translation initiation factor IF-2 (1038 aa).

Disordered regions lie at residues 39–346 (TISE…KWQE) and 403–451 (KPKA…PEKV). Positions 103–125 (RNTTSNAPEASVANNQIASSEAN) are enriched in polar residues. Residues 157-176 (PQKPAAPEAEPEAQSQAPAK) show a composition bias toward low complexity. 2 stretches are compositionally biased toward basic and acidic residues: residues 178–197 (AVEK…ERQP) and 226–243 (PILK…DQAK). Over residues 407–423 (ARAATAATAAPISSPTT) the composition is skewed to low complexity. Residues 431 to 450 (NNRDQNRRQETEVKRERPEK) are compositionally biased toward basic and acidic residues. Positions 532–705 (RRPPVVTIMG…LLVAEVGELS (174 aa)) constitute a tr-type G domain. The tract at residues 541-548 (GHVDHGKT) is G1. 541 to 548 (GHVDHGKT) contributes to the GTP binding site. Residues 566–570 (GITQH) form a G2 region. The interval 591-594 (DTPG) is G3. GTP is bound by residues 591 to 595 (DTPGH) and 645 to 648 (NKID). The tract at residues 645–648 (NKID) is G4. The interval 681-683 (SAI) is G5.

This sequence belongs to the TRAFAC class translation factor GTPase superfamily. Classic translation factor GTPase family. IF-2 subfamily.

It is found in the cytoplasm. Functionally, one of the essential components for the initiation of protein synthesis. Protects formylmethionyl-tRNA from spontaneous hydrolysis and promotes its binding to the 30S ribosomal subunits. Also involved in the hydrolysis of GTP during the formation of the 70S ribosomal complex. The chain is Translation initiation factor IF-2 from Trichormus variabilis (strain ATCC 29413 / PCC 7937) (Anabaena variabilis).